Reading from the N-terminus, the 91-residue chain is Defensin-like protein 82 (91 aa).

Residues 1-27 (MAIKKFSSLLLPLLMVLALVVLPIISG) form the signal peptide. Disulfide bonds link C34–C72, C41–C62, C47–C70, and C51–C71.

The protein belongs to the DEFL family.

It localises to the secreted. This is Defensin-like protein 82 from Arabidopsis thaliana (Mouse-ear cress).